Consider the following 71-residue polypeptide: MKLTCMVIVAVLLLTACQLITADDSRGTQKHRTLRSKTKLSMSTRCKAAGKPCSRIAYNCCTGSCRSGKCG.

The first 22 residues, 1–22 (MKLTCMVIVAVLLLTACQLITA), serve as a signal peptide directing secretion. Residues 23 to 45 (DDSRGTQKHRTLRSKTKLSMSTR) constitute a propeptide that is removed on maturation. 3 cysteine pairs are disulfide-bonded: cysteine 46–cysteine 61, cysteine 53–cysteine 65, and cysteine 60–cysteine 70. Position 70 is a cysteine amide (cysteine 70).

This sequence belongs to the conotoxin O1 superfamily. As to expression, expressed by the venom duct.

It localises to the secreted. Omega-conotoxins act at presynaptic membranes, they bind and block voltage-gated calcium channels (Cav). This peptide selectively targets Cav2.2/CACNA1B (IC(50)=160 nM) voltage-gated calcium channels. When tested in mammals, this toxin displays an analgesic potency similar to MVIIA in a range of acute and chronic pain models in rodents, but has less adverse effects (tremor, diminution of spontaneous locomotor activity and bad coordinated locomotion) compared with identical dosages of MVIIA injected intrathecally. The chain is Omega-conotoxin SO-3 from Conus striatus (Striated cone).